Reading from the N-terminus, the 451-residue chain is Cobalamin reductase PduS (451 aa).

4Fe-4S ferredoxin-type domains follow at residues 255–284 (TVLS…HELS) and 300–330 (PQLL…MRIN). Residues cysteine 264, cysteine 267, cysteine 270, cysteine 274, cysteine 309, cysteine 312, cysteine 315, and cysteine 320 each contribute to the [4Fe-4S] cluster site.

It belongs to the PduS cobalamin reductase family. As to quaternary structure, monomer, forms a complex with PduO. Interacts with PduT, probably via the N-terminus of PduS. Requires [4Fe-4S] cluster as cofactor. FMN serves as cofactor.

It is found in the bacterial microcompartment. It functions in the pathway polyol metabolism; 1,2-propanediol degradation. In terms of biological role, a bifunctional cobalamin reductase that converts cob(III)alamin to cob(II)alamin and then to cob(I)alamin in the bacterial microcompartment (BMC) dedicated to 1,2-propanediol (1,2-PD) degradation. PduS and PduO allow regeneration of the adenosylcobalamin cofactor within the BMC. Cobalamin reduction probably occurs spontaneously in the presence of free reduced flavin nucleotides, this protein may be involved in electron transfer for this reduction. Its function is as follows. Expression of a cosmid containing the full 21-gene pdu operon in E.coli allows E.coli to grow on 1,2-propanediol (1,2-PD) with the appearance of BMCs in its cytoplasm. Functionally, the 1,2-PD-specific bacterial microcompartment (BMC) concentrates low levels of 1,2-PD catabolic enzymes, concentrates volatile reaction intermediates thus enhancing pathway flux and keeps the level of toxic, mutagenic propionaldehyde low. This Citrobacter freundii protein is Cobalamin reductase PduS.